The primary structure comprises 209 residues: Large ribosomal subunit protein uL4 (209 aa).

Residues 44–77 (QRQGTHKSKERSEVSGSTRKLIRQKGGGGARRGD) form a disordered region.

The protein belongs to the universal ribosomal protein uL4 family. In terms of assembly, part of the 50S ribosomal subunit.

In terms of biological role, one of the primary rRNA binding proteins, this protein initially binds near the 5'-end of the 23S rRNA. It is important during the early stages of 50S assembly. It makes multiple contacts with different domains of the 23S rRNA in the assembled 50S subunit and ribosome. Its function is as follows. Forms part of the polypeptide exit tunnel. The protein is Large ribosomal subunit protein uL4 of Parabacteroides distasonis (strain ATCC 8503 / DSM 20701 / CIP 104284 / JCM 5825 / NCTC 11152).